A 186-amino-acid polypeptide reads, in one-letter code: MWLVECTGRDLTGLSCLLSMDRQPRRRQHVAGCRDVPPPLPQGSWGQTSPRHSILCSKSGCDLLGGGEYNGETSGEEFLAPAWTCRAQQAATWLSVQQTSHKALGPAGGAAMSSKLSPEEQFLSRIHFLRTFMCSVAGAELPGIPQATENGEGCRPARDPASSPSSLSMASVYTQCSSAQLVSALS.

The interval 147–166 is disordered; it reads ATENGEGCRPARDPASSPSS.

Interacts with DNA damage response proteins ATR, H2AX, PCNA, RAD18 and RAD51C. Forms a complex with H2AX and RAD18 following DDUP phosphorylation. Post-translationally, phosphorylated in an ATR-dependent manner; phosphorylation is required for interaction with H2AX and RAD18 and for DDUP-mediated DNA damage repair.

It is found in the nucleus. It localises to the chromosome. Promotes DNA damage repair through both homologous recombination repair (HRR) and post-replication repair (PRR) mechanisms. Enhances the retention of DNA damage response protein RAD18 at sites of DNA damage. This allows for HRR via association of RAD18 with RAD51C and for PRR via RAD18-mediated promotion of PCNA monoubiquitination. This is DNA damage up-regulated protein from Homo sapiens (Human).